The sequence spans 264 residues: Thymidylate synthase (264 aa).

A dUMP-binding site is contributed by R21. H51 contacts (6R)-5,10-methylene-5,6,7,8-tetrahydrofolate. A dUMP-binding site is contributed by 126–127; it reads RR. The active-site Nucleophile is C146. Residues 166 to 169, N177, and 207 to 209 each bind dUMP; these read RSCD and HLY. D169 contacts (6R)-5,10-methylene-5,6,7,8-tetrahydrofolate. A263 provides a ligand contact to (6R)-5,10-methylene-5,6,7,8-tetrahydrofolate.

It belongs to the thymidylate synthase family. Bacterial-type ThyA subfamily. As to quaternary structure, homodimer.

Its subcellular location is the cytoplasm. The enzyme catalyses dUMP + (6R)-5,10-methylene-5,6,7,8-tetrahydrofolate = 7,8-dihydrofolate + dTMP. It participates in pyrimidine metabolism; dTTP biosynthesis. In terms of biological role, catalyzes the reductive methylation of 2'-deoxyuridine-5'-monophosphate (dUMP) to 2'-deoxythymidine-5'-monophosphate (dTMP) while utilizing 5,10-methylenetetrahydrofolate (mTHF) as the methyl donor and reductant in the reaction, yielding dihydrofolate (DHF) as a by-product. This enzymatic reaction provides an intracellular de novo source of dTMP, an essential precursor for DNA biosynthesis. The chain is Thymidylate synthase from Pectobacterium atrosepticum (strain SCRI 1043 / ATCC BAA-672) (Erwinia carotovora subsp. atroseptica).